The primary structure comprises 181 residues: NADH-quinone oxidoreductase subunit B (181 aa).

4 residues coordinate [4Fe-4S] cluster: Cys45, Cys46, Cys111, and Cys140.

It belongs to the complex I 20 kDa subunit family. In terms of assembly, NDH-1 is composed of 15 different subunits. Subunits NuoB, C, D, E, F, and G constitute the peripheral sector of the complex. It depends on [4Fe-4S] cluster as a cofactor.

The protein resides in the cell membrane. It carries out the reaction a quinone + NADH + 5 H(+)(in) = a quinol + NAD(+) + 4 H(+)(out). Its function is as follows. NDH-1 shuttles electrons from NADH, via FMN and iron-sulfur (Fe-S) centers, to quinones in the respiratory chain. The immediate electron acceptor for the enzyme in this species is believed to be a menaquinone. Couples the redox reaction to proton translocation (for every two electrons transferred, four hydrogen ions are translocated across the cytoplasmic membrane), and thus conserves the redox energy in a proton gradient. The protein is NADH-quinone oxidoreductase subunit B of Deinococcus radiodurans (strain ATCC 13939 / DSM 20539 / JCM 16871 / CCUG 27074 / LMG 4051 / NBRC 15346 / NCIMB 9279 / VKM B-1422 / R1).